The sequence spans 318 residues: Biotin synthase (318 aa).

Residues 44-273 enclose the Radical SAM core domain; that stretch reads LCGNKFDLCT…TVQIRLAGGR (230 aa). The [4Fe-4S] cluster site is built by C62, C66, and C69. [2Fe-2S] cluster-binding residues include S106, C138, C198, and R268.

This sequence belongs to the radical SAM superfamily. Biotin synthase family. In terms of assembly, homodimer. It depends on [4Fe-4S] cluster as a cofactor. Requires [2Fe-2S] cluster as cofactor.

It catalyses the reaction (4R,5S)-dethiobiotin + (sulfur carrier)-SH + 2 reduced [2Fe-2S]-[ferredoxin] + 2 S-adenosyl-L-methionine = (sulfur carrier)-H + biotin + 2 5'-deoxyadenosine + 2 L-methionine + 2 oxidized [2Fe-2S]-[ferredoxin]. It functions in the pathway cofactor biosynthesis; biotin biosynthesis; biotin from 7,8-diaminononanoate: step 2/2. Catalyzes the conversion of dethiobiotin (DTB) to biotin by the insertion of a sulfur atom into dethiobiotin via a radical-based mechanism. This is Biotin synthase from Clostridium botulinum (strain Loch Maree / Type A3).